The following is a 1400-amino-acid chain: Bromodomain-containing protein 4 (1400 aa).

The disordered stretch occupies residues 1–58 (MSTESGPGTRLRNLPVMGDGLETSQMSTTQAQAQPQPANAASTNPPPPETSNPNKPKR). Over residues 23–43 (TSQMSTTQAQAQPQPANAAST) the composition is skewed to low complexity. The Bromo 1 domain occupies 58 to 164 (RQTNQLQYLL…KLFLQKINEL (107 aa)). K99 participates in a covalent cross-link: Glycyl lysine isopeptide (Lys-Gly) (interchain with G-Cter in SUMO2). Disordered stretches follow at residues 176-353 (AKGR…KISE) and 461-616 (EPEE…YEEK). Residues 197–212 (PNTTQASTSPQTQTPQ) show a composition bias toward low complexity. A compositionally biased stretch (pro residues) spans 244–267 (PPQPLQTPSPVPPQPPPPPAPVPQ). Residues 321-337 (PRRESSRPVKPPKKDVP) are compositionally biased toward basic and acidic residues. The 110-residue stretch at 349–458 (SKISEQLKCC…DVFEMRFAKM (110 aa)) folds into the Bromo 2 domain. S471 is modified (phosphoserine). The segment covering 479–498 (KVVAPPSSSDSSSDSSSDSD) has biased composition (low complexity). A phosphoserine; by CK2 mark is found at S485, S489, and S493. Residues 485 to 504 (SSSDSSSDSSSDSDSSTDDS) are NPS region. At S495 the chain carries Phosphoserine. A phosphoserine; by CK2 mark is found at S499, S500, and S504. The interval 525-580 (QLAALSQPQQNKPKKKEKDKKEKKKEKHKKKEEVEENKKSKTKELPPKKTKKNNSS) is BID region. Residues 536–554 (KPKKKEKDKKEKKKEKHKK) are compositionally biased toward basic residues. The segment covering 555-571 (KEEVEENKKSKTKELPP) has biased composition (basic and acidic residues). K586 is covalently cross-linked (Glycyl lysine isopeptide (Lys-Gly) (interchain with G-Cter in SUMO2)). Positions 601 to 683 (ESEEEDKCKP…SCLRKKRKPQ (83 aa)) constitute an NET domain. Residue S602 is modified to Phosphoserine. Basic and acidic residues predominate over residues 606 to 616 (DKCKPMSYEEK). Glycyl lysine isopeptide (Lys-Gly) (interchain with G-Cter in SUMO2) cross-links involve residues K646 and K695. Positions 675–1125 (CLRKKRKPQA…GCPPASPAAV (451 aa)) are disordered. Residues 700-713 (SSSESESTSESSSS) are compositionally biased toward low complexity. Residues 725 to 745 (KSKKKGHTGRDQKKHHHHHHP) show a composition bias toward basic residues. Pro residues-rich tracts occupy residues 748–787 (QPAPAPVPQQPPPPPQQPPPPPPPQQQQQQPPPPPPPPSM), 835–848 (PELPPHLPQPPEHS), 883–892 (PPKPTRPPAV), and 900–909 (PLLPQPPMAQ). Positions 928 to 938 (MQMQLYLQQLQ) are enriched in low complexity. 3 stretches are compositionally biased toward pro residues: residues 955–966 (QPPPPLPPPPHP), 975–1000 (PQPPPPPPPQPQPPPQQQHQPPPRPV), and 1013–1037 (QPPPPPGQQPTHPPPGQQPPPPQPA). Residues 1050 to 1400 (RHHKSDPYSA…LLSIFEENLF (351 aa)) form a C-terminal (CTD) region region. Residue K1053 forms a Glycyl lysine isopeptide (Lys-Gly) (interchain with G-Cter in SUMO2) linkage. Polar residues predominate over residues 1075-1084 (QMPQFQSLTH). A compositionally biased stretch (low complexity) spans 1085–1095 (QSPPQQNVQPK). At K1147 the chain carries N6-acetyllysine; alternate. A Glycyl lysine isopeptide (Lys-Gly) (interchain with G-Cter in SUMO1); alternate cross-link involves residue K1147. Residue K1147 forms a Glycyl lysine isopeptide (Lys-Gly) (interchain with G-Cter in SUMO2); alternate linkage. Phosphoserine is present on residues S1153 and S1162. The interval 1155–1377 (IIRSEPFSTS…KREQERRRRE (223 aa)) is disordered. Over residues 1211-1232 (PDKDKQKQEPKTPVAPKKDLKI) the composition is skewed to basic and acidic residues. K1233 participates in a covalent cross-link: Glycyl lysine isopeptide (Lys-Gly) (interchain with G-Cter in SUMO2). Phosphoserine occurs at positions 1237 and 1240. The segment covering 1247-1258 (TTPSSTAKSSSD) has biased composition (low complexity). The span at 1259–1320 (SFEHFRRAAR…AHEEARRRQE (62 aa)) shows a compositional bias: basic and acidic residues. Positions 1321–1357 (QQQQQQQQRQEQQQQQQQAAAVAAASAPQAQSSQPQS) are enriched in low complexity. A compositionally biased stretch (basic and acidic residues) spans 1361-1377 (QQRELARKREQERRRRE).

This sequence belongs to the BET family. In terms of assembly, binds acetylated histone H4. Interacts with p53/TP53; the interaction is direct. Interacts (via CTD region) with CDK9 and CCNT1, acting as an associated component of P-TEFb complex. Interacts with RELA (when acetylated at 'Lys-310'). Interacts (via NET domain) with NSD3, CHD4, BICRA and ATAD5. The interaction with BICRA bridges BRD4 to the GBAF complex. Interacts (via NET domain) with JMJD6 (via JmjC and N-terminal domains); the interaction is stronger in presence of ssRNA and recruits JMJD6 on distal enhancers. Interacts with NSD3. Interacts with NIPBL. Phosphorylation by CK2 disrupt the intramolecular binding between the bromo domain 2 and the NPS region and promotes binding between the NPS and the BID regions, leading to activate the protein and promote binding to acetylated histones. In absence of phosphorylation, BRD4 does not localize to p53/TP53 target gene promoters, phosphorylation promoting recruitment to p53/TP53 target promoters.

It localises to the nucleus. Its subcellular location is the chromosome. Chromatin reader protein that recognizes and binds acetylated histones and plays a key role in transmission of epigenetic memory across cell divisions and transcription regulation. Remains associated with acetylated chromatin throughout the entire cell cycle and provides epigenetic memory for postmitotic G1 gene transcription by preserving acetylated chromatin status and maintaining high-order chromatin structure. During interphase, plays a key role in regulating the transcription of signal-inducible genes by associating with the P-TEFb complex and recruiting it to promoters. Also recruits P-TEFb complex to distal enhancers, so called anti-pause enhancers in collaboration with JMJD6. BRD4 and JMJD6 are required to form the transcriptionally active P-TEFb complex by displacing negative regulators such as HEXIM1 and 7SKsnRNA complex from P-TEFb, thereby transforming it into an active form that can then phosphorylate the C-terminal domain (CTD) of RNA polymerase II. Regulates differentiation of naive CD4(+) T-cells into T-helper Th17 by promoting recruitment of P-TEFb to promoters. Promotes phosphorylation of 'Ser-2' of the C-terminal domain (CTD) of RNA polymerase II. According to a report, directly acts as an atypical protein kinase and mediates phosphorylation of 'Ser-2' of the C-terminal domain (CTD) of RNA polymerase II; these data however need additional evidences in vivo. In addition to acetylated histones, also recognizes and binds acetylated RELA, leading to further recruitment of the P-TEFb complex and subsequent activation of NF-kappa-B. Also acts as a regulator of p53/TP53-mediated transcription: following phosphorylation by CK2, recruited to p53/TP53 specific target promoters. This chain is Bromodomain-containing protein 4 (Brd4), found in Mus musculus (Mouse).